Consider the following 370-residue polypeptide: tRNA-specific 2-thiouridylase MnmA (370 aa).

Residues 11-18 (AMSGGVDS) and M37 contribute to the ATP site. Positions 99-101 (NPD) are interaction with target base in tRNA. C104 acts as the Nucleophile in catalysis. An intrachain disulfide couples C104 to C201. An ATP-binding site is contributed by G129. The segment at 151–153 (KDQ) is interaction with tRNA. The active-site Cysteine persulfide intermediate is C201. The interaction with tRNA stretch occupies residues 313 to 314 (RY).

The protein belongs to the MnmA/TRMU family. As to quaternary structure, interacts with TusE.

It is found in the cytoplasm. The catalysed reaction is S-sulfanyl-L-cysteinyl-[protein] + uridine(34) in tRNA + AH2 + ATP = 2-thiouridine(34) in tRNA + L-cysteinyl-[protein] + A + AMP + diphosphate + H(+). Functionally, catalyzes the 2-thiolation of uridine at the wobble position (U34) of tRNA(Lys), tRNA(Glu) and tRNA(Gln), leading to the formation of s(2)U34, the first step of tRNA-mnm(5)s(2)U34 synthesis. Sulfur is provided by IscS, via a sulfur-relay system. Binds ATP and its substrate tRNAs. This chain is tRNA-specific 2-thiouridylase MnmA, found in Buchnera aphidicola subsp. Baizongia pistaciae (strain Bp).